We begin with the raw amino-acid sequence, 545 residues long: Chaperonin GroEL (545 aa).

ATP contacts are provided by residues 30 to 33, Lys-51, 87 to 91, Gly-415, and Asp-495; these read TLGP and DGTTT.

This sequence belongs to the chaperonin (HSP60) family. In terms of assembly, forms a cylinder of 14 subunits composed of two heptameric rings stacked back-to-back. Interacts with the co-chaperonin GroES.

It localises to the cytoplasm. The catalysed reaction is ATP + H2O + a folded polypeptide = ADP + phosphate + an unfolded polypeptide.. Its function is as follows. Together with its co-chaperonin GroES, plays an essential role in assisting protein folding. The GroEL-GroES system forms a nano-cage that allows encapsulation of the non-native substrate proteins and provides a physical environment optimized to promote and accelerate protein folding. In Shewanella denitrificans (strain OS217 / ATCC BAA-1090 / DSM 15013), this protein is Chaperonin GroEL.